We begin with the raw amino-acid sequence, 132 residues long: Ribosome-binding factor A (132 aa).

The protein belongs to the RbfA family. As to quaternary structure, monomer. Binds 30S ribosomal subunits, but not 50S ribosomal subunits or 70S ribosomes.

It is found in the cytoplasm. Its function is as follows. One of several proteins that assist in the late maturation steps of the functional core of the 30S ribosomal subunit. Associates with free 30S ribosomal subunits (but not with 30S subunits that are part of 70S ribosomes or polysomes). Required for efficient processing of 16S rRNA. May interact with the 5'-terminal helix region of 16S rRNA. The sequence is that of Ribosome-binding factor A from Edwardsiella ictaluri (strain 93-146).